The following is a 733-amino-acid chain: Polyribonucleotide nucleotidyltransferase (733 aa).

Mg(2+) contacts are provided by D503 and D509. One can recognise a KH domain in the interval 570 to 629 (PRLTTIQIPVDAIGMVIGKGGETIRSITEETGAEINIDDDGTVTIACSSPEATKAAVETI). The 75-residue stretch at 639–713 (GTIYMGKVRD…GKTKFALSIK (75 aa)) folds into the S1 motif domain.

The protein belongs to the polyribonucleotide nucleotidyltransferase family. Requires Mg(2+) as cofactor.

It localises to the cytoplasm. The enzyme catalyses RNA(n+1) + phosphate = RNA(n) + a ribonucleoside 5'-diphosphate. Functionally, involved in mRNA degradation. Catalyzes the phosphorolysis of single-stranded polyribonucleotides processively in the 3'- to 5'-direction. This is Polyribonucleotide nucleotidyltransferase from Chlorobaculum tepidum (strain ATCC 49652 / DSM 12025 / NBRC 103806 / TLS) (Chlorobium tepidum).